The following is a 226-amino-acid chain: 2-C-methyl-D-erythritol 4-phosphate cytidylyltransferase (226 aa).

This sequence belongs to the IspD/TarI cytidylyltransferase family. IspD subfamily.

It catalyses the reaction 2-C-methyl-D-erythritol 4-phosphate + CTP + H(+) = 4-CDP-2-C-methyl-D-erythritol + diphosphate. Its pathway is isoprenoid biosynthesis; isopentenyl diphosphate biosynthesis via DXP pathway; isopentenyl diphosphate from 1-deoxy-D-xylulose 5-phosphate: step 2/6. Its function is as follows. Catalyzes the formation of 4-diphosphocytidyl-2-C-methyl-D-erythritol from CTP and 2-C-methyl-D-erythritol 4-phosphate (MEP). The polypeptide is 2-C-methyl-D-erythritol 4-phosphate cytidylyltransferase (Bacillus thuringiensis (strain Al Hakam)).